Here is a 443-residue protein sequence, read N- to C-terminus: Probable glycine dehydrogenase (decarboxylating) subunit 1 (443 aa).

Belongs to the GcvP family. N-terminal subunit subfamily. The glycine cleavage system is composed of four proteins: P, T, L and H. In this organism, the P 'protein' is a heterodimer of two subunits.

The enzyme catalyses N(6)-[(R)-lipoyl]-L-lysyl-[glycine-cleavage complex H protein] + glycine + H(+) = N(6)-[(R)-S(8)-aminomethyldihydrolipoyl]-L-lysyl-[glycine-cleavage complex H protein] + CO2. Its function is as follows. The glycine cleavage system catalyzes the degradation of glycine. The P protein binds the alpha-amino group of glycine through its pyridoxal phosphate cofactor; CO(2) is released and the remaining methylamine moiety is then transferred to the lipoamide cofactor of the H protein. This is Probable glycine dehydrogenase (decarboxylating) subunit 1 from Chlorobium limicola (strain DSM 245 / NBRC 103803 / 6330).